The primary structure comprises 576 residues: MLSHEMASTAHRQPSRPTTRQRQRTGRACEECRRRKLRCDGQQPRCGVCVDSGVTCEVNSQRRPRGPKKGYLTALRNRVAMLETRLPAQHLVGPLSEFNPLSTPLTNDHHDGCSVSSASSRSDSNPPPTVSEPDMSLPNTTTSVSSAPSFATCSKDIGGAEPITELVQAELNQLYFDRVHPSIQILHQRRYLGWARNAAKKTSRRCLQYAVWTLASLLSAQFQHLQDSFYQETKRTLEFSYLSGDSNAPVDTEEIQAWILIATYESMRTFHRSAWMSAGRAFRLVQLMRLHEIDSPTKPPVPEADLVETEEKRRVFWMAYFLDHLLSMRNNWPITLNEHVICTRLPAPDMEFQSGQPVLGAFLSEAIMDVMPQTTSPFNECVILATICGRSLFHAQQYSVRFVYGELAPNWTDQHQWLDNVLTNRLQILSQYYPSPTQICDPMLSFAHIMGQASVIHLYKGMASVVWAVDDGAWVVEYQRRALSAAQEIVKLAKGLTEFNFFKVHPLMPIPLLLCAEFLYSNRGSDAAFNSLLQELLQIFRQLKNANDPSRSYIHLLELSCTTASMSLVREHSNAP.

The interval Met1–Arg27 is disordered. Residues Cys29–Cys56 constitute a DNA-binding region (zn(2)-C6 fungal-type). The segment at Ser102–Pro148 is disordered. The segment covering Ser114 to Ser124 has biased composition (low complexity). The span at Leu137–Pro148 shows a compositional bias: polar residues.

It is found in the nucleus. Transcription factor that regulates the expression of the gene cluster that mediates the biosynthesis of the mycotoxin citrinin, a hepato-nephrotoxic compound to humans due to inhibition of respiration complex III. The protein is Citrinin biosynthesis transcriptional activator ctnR of Monascus purpureus (Red mold).